A 263-amino-acid chain; its full sequence is MQTHIINFAKYSSIKIGAPLEVSLIQTPQDAISALSQNMRIIGKANNLLVSPAAQKLAMLDKHFAYLKDCGNYIEIGGAYSSGRIFSYFKSHNLAGAEFLQALPGSLGGLVKMNAGMKSYEIKQLLQAINVNGKWQDRESFPMNYRDSGIEGVILAARFHKREGFNNALQADFIALRKNHPKEPSCGSCFKNPKGDFAGRLLESVGLKGYCIGDAAFSEKHANFLINKGKATFEDALSLITLAKKRVFEASGIDLECEVQILQ.

Arg-146 is a catalytic residue. Ser-188 acts as the Proton donor in catalysis. Residue Glu-258 is part of the active site.

It belongs to the MurB family. FAD is required as a cofactor.

Its subcellular location is the cytoplasm. It carries out the reaction UDP-N-acetyl-alpha-D-muramate + NADP(+) = UDP-N-acetyl-3-O-(1-carboxyvinyl)-alpha-D-glucosamine + NADPH + H(+). The protein operates within cell wall biogenesis; peptidoglycan biosynthesis. In terms of biological role, cell wall formation. In Helicobacter hepaticus (strain ATCC 51449 / 3B1), this protein is UDP-N-acetylenolpyruvoylglucosamine reductase.